The sequence spans 346 residues: Aspartate-semialdehyde dehydrogenase (346 aa).

NADP(+) is bound by residues 12–15 (SGAV) and 40–41 (RS). R101 contributes to the phosphate binding site. The active-site Acyl-thioester intermediate is C131. Q158 is a binding site for substrate. Residue 161–162 (SG) participates in NADP(+) binding. A phosphate-binding site is contributed by K225. R246 is a substrate binding site. H253 acts as the Proton acceptor in catalysis. Q326 is an NADP(+) binding site.

This sequence belongs to the aspartate-semialdehyde dehydrogenase family. Homodimer.

It catalyses the reaction L-aspartate 4-semialdehyde + phosphate + NADP(+) = 4-phospho-L-aspartate + NADPH + H(+). It functions in the pathway amino-acid biosynthesis; L-lysine biosynthesis via DAP pathway; (S)-tetrahydrodipicolinate from L-aspartate: step 2/4. Its pathway is amino-acid biosynthesis; L-methionine biosynthesis via de novo pathway; L-homoserine from L-aspartate: step 2/3. The protein operates within amino-acid biosynthesis; L-threonine biosynthesis; L-threonine from L-aspartate: step 2/5. Functionally, catalyzes the NADPH-dependent formation of L-aspartate-semialdehyde (L-ASA) by the reductive dephosphorylation of L-aspartyl-4-phosphate. This is Aspartate-semialdehyde dehydrogenase from Helicobacter pylori (strain J99 / ATCC 700824) (Campylobacter pylori J99).